Consider the following 132-residue polypeptide: Sec-independent protein translocase protein TatB (132 aa).

The chain crosses the membrane as a helical span at residues 1 to 21; the sequence is MFDIGFWELVLISVVGLVVLG. Residues 70-132 form a disordered region; it reads GMEDLSPELK…KVSAADKKAE (63 aa). Composition is skewed to basic and acidic residues over residues 96–108 and 115–132; these read YADKAQSETETAK and SAEKVEEIKVSAADKKAE.

Belongs to the TatB family. In terms of assembly, the Tat system comprises two distinct complexes: a TatABC complex, containing multiple copies of TatA, TatB and TatC subunits, and a separate TatA complex, containing only TatA subunits. Substrates initially bind to the TatABC complex, which probably triggers association of the separate TatA complex to form the active translocon.

The protein localises to the cell inner membrane. Part of the twin-arginine translocation (Tat) system that transports large folded proteins containing a characteristic twin-arginine motif in their signal peptide across membranes. Together with TatC, TatB is part of a receptor directly interacting with Tat signal peptides. TatB may form an oligomeric binding site that transiently accommodates folded Tat precursor proteins before their translocation. The polypeptide is Sec-independent protein translocase protein TatB (Vibrio parahaemolyticus serotype O3:K6 (strain RIMD 2210633)).